The primary structure comprises 353 residues: MVTQDLKKFSTPVFPFTAIVGQEEMKLALQLNVIDPKIGGVMIMGDRGTGKSTTIRAIADLLPEIEVVKDDPFNSHKSDLDLMGNEIKLAIQNGESLETELIKIPMVDLPLGATEDRVCGTIDIEKALTEGVKAFEPGLLAKANRGILYVDEVNLLDDHLVDILLDSAASGWNTVEREGISIRHPARFVLVGSGNPEEGELRPQLLDRFGMHAEIRTVKDPILRVKVVEERTSFDQTPMVWIENYEKQQQELRDRIVLAQKVLPTVELDYDLRVKISEVCSQLDVDGLRGDIVTNRAAKAHAAYHGRDKVTVEDIAKIITLCLRHRLRKDPLETIDSGNKVSKVFNEIFEIEE.

An ATP-binding site is contributed by 45–52; that stretch reads GDRGTGKS.

It belongs to the Mg-chelatase subunits D/I family.

It localises to the plastid. It is found in the chloroplast. It catalyses the reaction protoporphyrin IX + Mg(2+) + ATP + H2O = Mg-protoporphyrin IX + ADP + phosphate + 3 H(+). It participates in porphyrin-containing compound metabolism; chlorophyll biosynthesis. Functionally, involved in chlorophyll biosynthesis; introduces a magnesium ion into protoporphyrin IX to yield Mg-protoporphyrin IX. The protein is Magnesium-chelatase subunit ChlI (chlI) of Trieres chinensis (Marine centric diatom).